The sequence spans 931 residues: Chitin synthase III (931 aa).

2 N-linked (GlcNAc...) asparagine glycosylation sites follow: asparagine 37 and asparagine 94. A disordered region spans residues 93 to 154; the sequence is PNASQLPPAG…PGGVGQAGGL (62 aa). Residues 102-122 show a composition bias toward gly residues; that stretch reads GSGGFGDNGFGQYGQPQGFGG. An N-linked (GlcNAc...) asparagine glycan is attached at asparagine 558. Helical transmembrane passes span 585 to 605, 644 to 664, 677 to 697, 731 to 751, and 759 to 779; these read FFLH…WFSL, IINA…FILA, IASF…SGYL, VILI…FLYL, and SFPY…VYAF. Asparagine 802 carries an N-linked (GlcNAc...) asparagine glycan. 2 consecutive transmembrane segments (helical) span residues 858–878 and 899–919; these read TGLV…ITSD and FLLY…LWFL.

The protein belongs to the chitin synthase family. Class III subfamily. Highly expressed in conidia and during appressorium formation.

The protein localises to the cell membrane. The catalysed reaction is [(1-&gt;4)-N-acetyl-beta-D-glucosaminyl](n) + UDP-N-acetyl-alpha-D-glucosamine = [(1-&gt;4)-N-acetyl-beta-D-glucosaminyl](n+1) + UDP + H(+). Polymerizes chitin, a structural polymer of the cell wall and septum, by transferring the sugar moiety of UDP-GlcNAc to the non-reducing end of the growing chitin polymer. Contributes to the production of conidia and the ability of fungal conidia to germinate. Involved in the fungal cell wall integrity and the ability of conidia to withstand biophysical pressure. Required for appressorium formation and evasion of insect cellular and/or humoral defenses, promoting the fungal dimorphic transition to the production of hyphal bodies that occurs within hosts, and ultimately to virulence. The sequence is that of Chitin synthase III from Metarhizium acridum (strain CQMa 102).